We begin with the raw amino-acid sequence, 257 residues long: Imidazole glycerol phosphate synthase subunit HisF (257 aa).

Catalysis depends on residues Asp11 and Asp130.

The protein belongs to the HisA/HisF family. In terms of assembly, heterodimer of HisH and HisF.

Its subcellular location is the cytoplasm. It carries out the reaction 5-[(5-phospho-1-deoxy-D-ribulos-1-ylimino)methylamino]-1-(5-phospho-beta-D-ribosyl)imidazole-4-carboxamide + L-glutamine = D-erythro-1-(imidazol-4-yl)glycerol 3-phosphate + 5-amino-1-(5-phospho-beta-D-ribosyl)imidazole-4-carboxamide + L-glutamate + H(+). Its pathway is amino-acid biosynthesis; L-histidine biosynthesis; L-histidine from 5-phospho-alpha-D-ribose 1-diphosphate: step 5/9. IGPS catalyzes the conversion of PRFAR and glutamine to IGP, AICAR and glutamate. The HisF subunit catalyzes the cyclization activity that produces IGP and AICAR from PRFAR using the ammonia provided by the HisH subunit. The polypeptide is Imidazole glycerol phosphate synthase subunit HisF (Shewanella frigidimarina (strain NCIMB 400)).